Here is a 178-residue protein sequence, read N- to C-terminus: Ribulose bisphosphate carboxylase small subunit, chloroplastic (178 aa).

The N-terminal 54 residues, 1–54, are a transit peptide targeting the chloroplast; the sequence is MALISSAAVTTINRAPVQANLATPFTGLKSSAGFPVTKKNNDITSITSNGSRVN.

It belongs to the RuBisCO small chain family. Heterohexadecamer of 8 large and 8 small subunits.

It localises to the plastid. The protein resides in the chloroplast. Its function is as follows. RuBisCO catalyzes two reactions: the carboxylation of D-ribulose 1,5-bisphosphate, the primary event in carbon dioxide fixation, as well as the oxidative fragmentation of the pentose substrate. Both reactions occur simultaneously and in competition at the same active site. Although the small subunit is not catalytic it is essential for maximal activity. This Trifolium repens (Creeping white clover) protein is Ribulose bisphosphate carboxylase small subunit, chloroplastic.